The primary structure comprises 480 residues: Probable serine/threonine-protein phosphatase 2A regulatory subunit B'' subunit TON2 (480 aa).

EF-hand domains follow at residues 186–221 (VSLT…LIPN), 294–329 (TSAQ…TLTE), and 369–404 (DTPE…VHQK). Ca(2+) contacts are provided by aspartate 307, aspartate 309, serine 311, serine 313, and glutamate 318.

As to quaternary structure, interacts with PP2AA1. In terms of tissue distribution, widely expressed.

It is found in the cytoplasm. The protein localises to the cytoskeleton. Its function is as follows. Probable regulatory subunit of type 2A protein phosphatase involved in the control of the dynamic organization of the cortical cytoskeleton. Plays an important role in the organization of interphase microtubule arrays in part through the regulation of nucleation geometry. Required for the reorganization of cortical arrays in response to light. This Arabidopsis thaliana (Mouse-ear cress) protein is Probable serine/threonine-protein phosphatase 2A regulatory subunit B'' subunit TON2 (TON2).